We begin with the raw amino-acid sequence, 50 residues long: Sperm protamine P1 (50 aa).

Belongs to the protamine P1 family. Cross-linked by interchain disulfide bonds around the DNA-helix. In terms of tissue distribution, testis.

The protein resides in the nucleus. Its subcellular location is the chromosome. Its function is as follows. Protamines substitute for histones in the chromatin of sperm during the haploid phase of spermatogenesis. They compact sperm DNA into a highly condensed, stable and inactive complex. The protein is Sperm protamine P1 (PRM1) of Saguinus imperator (Emperor tamarin).